Consider the following 429-residue polypeptide: UDP-N-acetylglucosamine 1-carboxyvinyltransferase (429 aa).

Residue 22-23 coordinates phosphoenolpyruvate; sequence KN. A UDP-N-acetyl-alpha-D-glucosamine-binding site is contributed by R102. Residue C126 is the Proton donor of the active site. C126 is modified (2-(S-cysteinyl)pyruvic acid O-phosphothioketal). Residues 131–135, 171–174, D316, and I338 each bind UDP-N-acetyl-alpha-D-glucosamine; these read RPVDL and KVSV.

Belongs to the EPSP synthase family. MurA subfamily.

The protein resides in the cytoplasm. The catalysed reaction is phosphoenolpyruvate + UDP-N-acetyl-alpha-D-glucosamine = UDP-N-acetyl-3-O-(1-carboxyvinyl)-alpha-D-glucosamine + phosphate. Its pathway is cell wall biogenesis; peptidoglycan biosynthesis. Functionally, cell wall formation. Adds enolpyruvyl to UDP-N-acetylglucosamine. The protein is UDP-N-acetylglucosamine 1-carboxyvinyltransferase of Chelativorans sp. (strain BNC1).